The chain runs to 374 residues: F-box/LRR-repeat protein 8 (374 aa).

The region spanning 2-48 is the F-box domain; sequence GELVDNLPEEVLALIFRDLPLRDLAVATRVCRAWAAAAANSTVWSDK.

As to quaternary structure, directly interacts with SKP1 and CUL1. In terms of tissue distribution, widely expressed during embryogenesis and in adult tissues.

Substrate-recognition component of the SCF (SKP1-CUL1-F-box protein)-type E3 ubiquitin ligase complex. This is F-box/LRR-repeat protein 8 (Fbxl8) from Mus musculus (Mouse).